The sequence spans 468 residues: Nuclear distribution protein PAC1-2 (468 aa).

The LisH domain occupies 13–45; it reads QAEELHKSIIAYLTSLNLATTANTLRAELNLPE. Residues 66–92 are a coiled coil; that stretch reads SVIRLQKKVLDLQAENAHLKNEIENAG. 8 WD repeats span residues 118–159, 161–201, 205–251, 254–293, 298–358, 360–399, 404–429, and 430–468; these read GHRL…RTLK, HTKA…KNIR, GHDH…CVKT, GHNDWPRAVAPSADGRWLLSTGSDKAARLWDIGGTEPECR, GHEN…IKVL, GHDNWVRGLAFHPAGKFLISVADDRTMRCWDLSQDGKCVQ, MFDGFVSCVRWAPGITKDGLAGGDAG, and DGTPKKKTGAEANGGVQMRCVVATGSVDGTEGKVRIFAN.

It belongs to the WD repeat LIS1/nudF family. As to quaternary structure, self-associates. Interacts with NDL1 and dynein.

The protein localises to the cytoplasm. It localises to the cytoskeleton. The protein resides in the spindle pole. Its function is as follows. Positively regulates the activity of the minus-end directed microtubule motor protein dynein. May enhance dynein-mediated microtubule sliding by targeting dynein to the microtubule plus end. Required for nuclear migration during vegetative growth as well as development. Required for retrograde early endosome (EE) transport from the hyphal tip. Required for localization of dynein to the mitotic spindle poles. Recruits additional proteins to the dynein complex at SPBs. In Podospora anserina (strain S / ATCC MYA-4624 / DSM 980 / FGSC 10383) (Pleurage anserina), this protein is Nuclear distribution protein PAC1-2.